The chain runs to 425 residues: Glucose-1-phosphate adenylyltransferase (425 aa).

Alpha-D-glucose 1-phosphate-binding positions include Tyr-109, Gly-175, 190–191, and Ser-208; that span reads EK.

The protein belongs to the bacterial/plant glucose-1-phosphate adenylyltransferase family. Homotetramer.

The catalysed reaction is alpha-D-glucose 1-phosphate + ATP + H(+) = ADP-alpha-D-glucose + diphosphate. The protein operates within glycan biosynthesis; glycogen biosynthesis. Involved in the biosynthesis of ADP-glucose, a building block required for the elongation reactions to produce glycogen. Catalyzes the reaction between ATP and alpha-D-glucose 1-phosphate (G1P) to produce pyrophosphate and ADP-Glc. In Saccharophagus degradans (strain 2-40 / ATCC 43961 / DSM 17024), this protein is Glucose-1-phosphate adenylyltransferase.